We begin with the raw amino-acid sequence, 330 residues long: ADP-L-glycero-D-manno-heptose-6-epimerase (330 aa).

NADP(+) contacts are provided by residues 11–12 (FI), 32–33 (DN), Lys-39, Lys-54, 75–79 (EGACS), and Asn-92. The Proton acceptor role is filled by Tyr-139. Lys-143 lines the NADP(+) pocket. Residue Asn-168 coordinates substrate. Residues Val-169 and Lys-177 each contribute to the NADP(+) site. Lys-177 (proton acceptor) is an active-site residue. Substrate-binding positions include Arg-179, His-186, 200 to 203 (FGEY), Arg-213, and Tyr-292.

It belongs to the NAD(P)-dependent epimerase/dehydratase family. HldD subfamily. In terms of assembly, homopentamer. NADP(+) is required as a cofactor.

The catalysed reaction is ADP-D-glycero-beta-D-manno-heptose = ADP-L-glycero-beta-D-manno-heptose. The protein operates within nucleotide-sugar biosynthesis; ADP-L-glycero-beta-D-manno-heptose biosynthesis; ADP-L-glycero-beta-D-manno-heptose from D-glycero-beta-D-manno-heptose 7-phosphate: step 4/4. Catalyzes the interconversion between ADP-D-glycero-beta-D-manno-heptose and ADP-L-glycero-beta-D-manno-heptose via an epimerization at carbon 6 of the heptose. In Paraburkholderia xenovorans (strain LB400), this protein is ADP-L-glycero-D-manno-heptose-6-epimerase.